Consider the following 181-residue polypeptide: Thioredoxin M-type, chloroplastic (181 aa).

Residues 1–67 constitute a chloroplast transit peptide; it reads MAIENCLQLS…RQFRYSSVVC (67 aa). Residues 68 to 180 form the Thioredoxin domain; the sequence is KASEAVKEVQ…LTDSIEKYLS (113 aa). Residues cysteine 104 and cysteine 107 each act as nucleophile in the active site. A disulfide bridge connects residues cysteine 104 and cysteine 107.

The protein belongs to the thioredoxin family. Plant M-type subfamily. In terms of assembly, forms a complex with heterodimeric ferredoxin-thioredoxin reductase (FTR) and ferredoxin.

The protein localises to the plastid. It localises to the chloroplast. Functionally, participates in various redox reactions through the reversible oxidation of the active center dithiol to a disulfide. The M form is known to activate NADP-malate dehydrogenase. The protein is Thioredoxin M-type, chloroplastic of Spinacia oleracea (Spinach).